Reading from the N-terminus, the 199-residue chain is Octanoyltransferase (199 aa).

One can recognise a BPL/LPL catalytic domain in the interval Ser-27–Lys-199. Residues Arg-66–His-73, Ser-133–Gly-135, and Gly-146–Ala-148 each bind substrate. Cys-164 acts as the Acyl-thioester intermediate in catalysis.

Belongs to the LipB family.

Its subcellular location is the cytoplasm. The catalysed reaction is octanoyl-[ACP] + L-lysyl-[protein] = N(6)-octanoyl-L-lysyl-[protein] + holo-[ACP] + H(+). Its pathway is protein modification; protein lipoylation via endogenous pathway; protein N(6)-(lipoyl)lysine from octanoyl-[acyl-carrier-protein]: step 1/2. Functionally, catalyzes the transfer of endogenously produced octanoic acid from octanoyl-acyl-carrier-protein onto the lipoyl domains of lipoate-dependent enzymes. Lipoyl-ACP can also act as a substrate although octanoyl-ACP is likely to be the physiological substrate. This chain is Octanoyltransferase, found in Legionella pneumophila (strain Lens).